The sequence spans 89 residues: Small ribosomal subunit protein uS17 (89 aa).

The protein belongs to the universal ribosomal protein uS17 family. In terms of assembly, part of the 30S ribosomal subunit.

Its function is as follows. One of the primary rRNA binding proteins, it binds specifically to the 5'-end of 16S ribosomal RNA. The polypeptide is Small ribosomal subunit protein uS17 (Azoarcus sp. (strain BH72)).